The sequence spans 904 residues: DNA mismatch repair protein MutS (904 aa).

Residue 638–645 (GPNMAGKS) participates in ATP binding. The tract at residues 825-869 (KSKADGTRRPASYHEAQPLLPGMPEPPSTASAEPPQTVTPPEPPV) is disordered.

The protein belongs to the DNA mismatch repair MutS family.

Its function is as follows. This protein is involved in the repair of mismatches in DNA. It is possible that it carries out the mismatch recognition step. This protein has a weak ATPase activity. The sequence is that of DNA mismatch repair protein MutS from Oleidesulfovibrio alaskensis (strain ATCC BAA-1058 / DSM 17464 / G20) (Desulfovibrio alaskensis).